Consider the following 264-residue polypeptide: Propanediol uptake facilitator PduF (264 aa).

Helical transmembrane passes span Gly10–Leu30 and Ile42–Gly62. The NPA 1 motif lies at Asn66–Ala68. 3 helical membrane passes run Val84–Val104, Val143–Ala163, and Leu179–Ala199. The short motif at Asn201–Ala203 is the NPA 2 element. The chain crosses the membrane as a helical span at residues Ile228 to Ile248.

The protein belongs to the MIP/aquaporin (TC 1.A.8) family.

Its subcellular location is the cell inner membrane. Probably facilitates diffusion of 1,2-propanediol (1,2-PD) into the cell. Modeling suggests active transport of 1,2-PD is required at low extracellular concentrations to allow maximal growth and saturation of PduP/PduQ within the bacterial microcompartment (BMC); this protein may be the cellular transporter. In terms of biological role, the 1,2-PD-specific bacterial microcompartment (BMC) concentrates low levels of 1,2-PD catabolic enzymes, concentrates volatile reaction intermediates thus enhancing pathway flux and keeps the level of toxic, mutagenic propionaldehyde low. The chain is Propanediol uptake facilitator PduF from Salmonella typhimurium (strain LT2 / SGSC1412 / ATCC 700720).